The chain runs to 161 residues: Glutaredoxin-2, mitochondrial (161 aa).

The N-terminal 19 residues, 1-19, are a transit peptide targeting the mitochondrion; sequence MLWRRAALAGTRLVWSRSG. Ser20 is modified (phosphoserine). The 101-residue stretch at 54-154 folds into the Glutaredoxin domain; the sequence is VNQIQETISD…PLVHQCYLKK (101 aa). Cys65 contacts [2Fe-2S] cluster. Lys71 contacts glutathione. An S-glutathionyl cysteine; alternate modification is found at Cys74. A disulfide bond links Cys74 and Cys77. Gln106 and Val118 together coordinate glutathione. Position 150 (Cys150) interacts with [2Fe-2S] cluster.

This sequence belongs to the glutaredoxin family. In terms of assembly, monomer; active form. Homodimer; inactive form. The homodimer is probably linked by 1 2Fe-2S cluster.

The protein localises to the mitochondrion. The 2Fe-2S present in the homodimer leads to inactivation of the enzyme. The 2Fe-2S may serve as a redox sensor: the presence of one-electron oxidants or reductants leading to the loss of the 2Fe-2S cluster, subsequent monomerization and activation of the enzyme. In terms of biological role, glutathione-dependent oxidoreductase that facilitates the maintenance of mitochondrial redox homeostasis upon induction of apoptosis by oxidative stress. Involved in response to hydrogen peroxide and regulation of apoptosis caused by oxidative stress. Acts as a very efficient catalyst of monothiol reactions because of its high affinity for protein glutathione-mixed disulfides. Can receive electrons not only from glutathione (GSH), but also from thioredoxin reductase supporting both monothiol and dithiol reactions. Efficiently catalyzes both glutathionylation and deglutathionylation of mitochondrial complex I, which in turn regulates the superoxide production by the complex. Overexpression decreases the susceptibility to apoptosis and prevents loss of cardiolipin and cytochrome c release. The protein is Glutaredoxin-2, mitochondrial (GLRX2) of Pongo abelii (Sumatran orangutan).